We begin with the raw amino-acid sequence, 316 residues long: Ribonuclease HIII (316 aa).

One can recognise an RNase H type-2 domain in the interval 101-316 (QVIIGSDEVG…SNFQQIIKNK (216 aa)). A divalent metal cation contacts are provided by D107, E108, and D211.

The protein belongs to the RNase HII family. RnhC subfamily. It depends on Mn(2+) as a cofactor. Mg(2+) is required as a cofactor.

The protein resides in the cytoplasm. The catalysed reaction is Endonucleolytic cleavage to 5'-phosphomonoester.. Functionally, endonuclease that specifically degrades the RNA of RNA-DNA hybrids. This Ureaplasma parvum serovar 3 (strain ATCC 700970) protein is Ribonuclease HIII (rnhC).